The sequence spans 219 residues: MNQLEMKKVAAKAALQFVKPDMIVGVGSGSTVNCFIEELGAFRDQIKGAVAASKASEELLRKQGIEVFSANDVSSLDIYVDGADEINPQKMMIKGGGAALTREKIVSSLAKNFICIVDSSKQVDILGSTFPLPVEVIPMARSQVARKLVALGGSPEWREGVITDNGNVILDVHNFIIMNPIEMEKELNNVAGVVTNGIFALNAAHTVIVGTPDGAKIIE.

Residues 28–31 (SGST), 81–84 (DGAD), and 94–97 (KGGG) contribute to the substrate site. Catalysis depends on glutamate 103, which acts as the Proton acceptor. Position 121 (lysine 121) interacts with substrate.

It belongs to the ribose 5-phosphate isomerase family. As to quaternary structure, homodimer.

It catalyses the reaction aldehydo-D-ribose 5-phosphate = D-ribulose 5-phosphate. It functions in the pathway carbohydrate degradation; pentose phosphate pathway; D-ribose 5-phosphate from D-ribulose 5-phosphate (non-oxidative stage): step 1/1. Catalyzes the reversible conversion of ribose-5-phosphate to ribulose 5-phosphate. This is Ribose-5-phosphate isomerase A from Mannheimia succiniciproducens (strain KCTC 0769BP / MBEL55E).